Consider the following 156-residue polypeptide: Small ribosomal subunit protein uS7 (156 aa).

It belongs to the universal ribosomal protein uS7 family. Part of the 30S ribosomal subunit. Contacts proteins S9 and S11.

Its function is as follows. One of the primary rRNA binding proteins, it binds directly to 16S rRNA where it nucleates assembly of the head domain of the 30S subunit. Is located at the subunit interface close to the decoding center, probably blocks exit of the E-site tRNA. The polypeptide is Small ribosomal subunit protein uS7 (Sinorhizobium medicae (strain WSM419) (Ensifer medicae)).